The following is a 291-amino-acid chain: ATP synthase gamma chain (291 aa).

Belongs to the ATPase gamma chain family. F-type ATPases have 2 components, CF(1) - the catalytic core - and CF(0) - the membrane proton channel. CF(1) has five subunits: alpha(3), beta(3), gamma(1), delta(1), epsilon(1). CF(0) has three main subunits: a, b and c.

It is found in the cell inner membrane. Its function is as follows. Produces ATP from ADP in the presence of a proton gradient across the membrane. The gamma chain is believed to be important in regulating ATPase activity and the flow of protons through the CF(0) complex. This chain is ATP synthase gamma chain, found in Rhodopseudomonas palustris (strain HaA2).